We begin with the raw amino-acid sequence, 51 residues long: Large ribosomal subunit protein eL39 (51 aa).

Belongs to the eukaryotic ribosomal protein eL39 family.

The sequence is that of Large ribosomal subunit protein eL39 (rpl39e) from Methanocaldococcus jannaschii (strain ATCC 43067 / DSM 2661 / JAL-1 / JCM 10045 / NBRC 100440) (Methanococcus jannaschii).